The following is a 414-amino-acid chain: Gamma-glutamyl phosphate reductase (414 aa).

Belongs to the gamma-glutamyl phosphate reductase family.

The protein localises to the cytoplasm. The enzyme catalyses L-glutamate 5-semialdehyde + phosphate + NADP(+) = L-glutamyl 5-phosphate + NADPH + H(+). It functions in the pathway amino-acid biosynthesis; L-proline biosynthesis; L-glutamate 5-semialdehyde from L-glutamate: step 2/2. Its function is as follows. Catalyzes the NADPH-dependent reduction of L-glutamate 5-phosphate into L-glutamate 5-semialdehyde and phosphate. The product spontaneously undergoes cyclization to form 1-pyrroline-5-carboxylate. The sequence is that of Gamma-glutamyl phosphate reductase from Thermoanaerobacter pseudethanolicus (strain ATCC 33223 / 39E) (Clostridium thermohydrosulfuricum).